The sequence spans 315 residues: Ribosomal RNA small subunit methyltransferase H (315 aa).

Residues 37-39, Asp57, Phe83, Asp105, and Gln112 each bind S-adenosyl-L-methionine; that span reads GGH.

It belongs to the methyltransferase superfamily. RsmH family.

It localises to the cytoplasm. The catalysed reaction is cytidine(1402) in 16S rRNA + S-adenosyl-L-methionine = N(4)-methylcytidine(1402) in 16S rRNA + S-adenosyl-L-homocysteine + H(+). Functionally, specifically methylates the N4 position of cytidine in position 1402 (C1402) of 16S rRNA. The polypeptide is Ribosomal RNA small subunit methyltransferase H (Pseudomonas fluorescens (strain ATCC BAA-477 / NRRL B-23932 / Pf-5)).